We begin with the raw amino-acid sequence, 278 residues long: Tryptophan synthase alpha chain (278 aa).

Catalysis depends on proton acceptor residues E61 and D72.

It belongs to the TrpA family. As to quaternary structure, tetramer of two alpha and two beta chains.

The catalysed reaction is (1S,2R)-1-C-(indol-3-yl)glycerol 3-phosphate + L-serine = D-glyceraldehyde 3-phosphate + L-tryptophan + H2O. It functions in the pathway amino-acid biosynthesis; L-tryptophan biosynthesis; L-tryptophan from chorismate: step 5/5. Functionally, the alpha subunit is responsible for the aldol cleavage of indoleglycerol phosphate to indole and glyceraldehyde 3-phosphate. The protein is Tryptophan synthase alpha chain of Shewanella oneidensis (strain ATCC 700550 / JCM 31522 / CIP 106686 / LMG 19005 / NCIMB 14063 / MR-1).